The sequence spans 451 residues: GABA transporter 1 (451 aa).

Helical transmembrane passes span Cys-35–Phe-55, Phe-57–Ser-77, Val-115–Gly-135, Leu-153–Phe-173, Leu-182–Gly-202, Val-222–Pro-242, Met-262–Phe-282, Phe-308–Leu-328, Leu-356–Phe-376, Leu-382–Phe-402, and Phe-411–Met-431.

The protein belongs to the amino acid/polyamine transporter 2 family. Amino acid/auxin permease (AAAP) (TC 2.A.18.2) subfamily. Highly expressed in flowers and at lower levels in roots, leaves and stems.

The protein resides in the cell membrane. Functionally, high affinity gamma-aminobutyric acid (GABA) transporter probably involved in GABA uptake into cells. When expressed in a heterologous system (Xenopus oocytes), imports GABA, butylamine, beta- and L-Alanine, 5-aminovaleric acid, 6-aminocaproic acid and 8-aminocaprylic acid, but does not mediate the transport of proline or glycine betaine. This Arabidopsis thaliana (Mouse-ear cress) protein is GABA transporter 1 (GAT1).